A 193-amino-acid chain; its full sequence is uncharacterized protein (193 aa).

Residues 55–94 form a disordered region; that stretch reads PVGGAAGARSLSQALPAPAPPPPPPPGLGPSSERPWPSPW. Positions 71–82 are enriched in pro residues; it reads APAPPPPPPPGL.

This is an uncharacterized protein from Homo sapiens (Human).